The sequence spans 165 residues: Ribosome maturation factor RimM (165 aa).

Residues 94–165 (EDEFYIADLN…YVILNYQTKV (72 aa)) form the PRC barrel domain.

This sequence belongs to the RimM family. In terms of assembly, binds ribosomal protein uS19.

It localises to the cytoplasm. Its function is as follows. An accessory protein needed during the final step in the assembly of 30S ribosomal subunit, possibly for assembly of the head region. Essential for efficient processing of 16S rRNA. May be needed both before and after RbfA during the maturation of 16S rRNA. It has affinity for free ribosomal 30S subunits but not for 70S ribosomes. This chain is Ribosome maturation factor RimM, found in Rickettsia prowazekii (strain Madrid E).